The sequence spans 681 residues: Probable L-type lectin-domain containing receptor kinase S.7 (681 aa).

The first 21 residues, 1–21 (MSLSRKLLVIFFTWITALSMS), serve as a signal peptide directing secretion. Over 22–305 (KPIFVSSDNM…PSKKRRHRHN (284 aa)) the chain is Extracellular. Positions 30-265 (NMNFTFKSFT…IHLIENWSFK (236 aa)) are legume-lectin like. 7 N-linked (GlcNAc...) asparagine glycosylation sites follow: asparagine 32, asparagine 42, asparagine 86, asparagine 121, asparagine 135, asparagine 261, and asparagine 281. Residues 306 to 326 (LAIGLGISCPVLICLALFVFG) form a helical membrane-spanning segment. Over 327 to 681 (YFTLKKWKSV…EGDSIVYVVS (355 aa)) the chain is Cytoplasmic. One can recognise a Protein kinase domain in the interval 365–643 (FHSSRVIGRG…RVLQILNNEI (279 aa)). Residues 371-379 (IGRGAFGNV) and lysine 394 each bind ATP. Residue aspartate 493 is the Proton acceptor of the active site.

The protein in the C-terminal section; belongs to the protein kinase superfamily. Ser/Thr protein kinase family. It in the N-terminal section; belongs to the leguminous lectin family.

It is found in the cell membrane. The enzyme catalyses L-seryl-[protein] + ATP = O-phospho-L-seryl-[protein] + ADP + H(+). It catalyses the reaction L-threonyl-[protein] + ATP = O-phospho-L-threonyl-[protein] + ADP + H(+). In terms of biological role, involved in resistance response to the pathogenic oomycetes Phytophthora infestans and Phytophthora capsici. The protein is Probable L-type lectin-domain containing receptor kinase S.7 of Arabidopsis thaliana (Mouse-ear cress).